The chain runs to 205 residues: Large ribosomal subunit protein uL4 (205 aa).

The disordered stretch occupies residues 43–96 (GKRQGTSKVKNRSAVRGGGKKPWRQKGTGRARQGSIRSPQWRGGGTVFGPTPRS). A compositionally biased stretch (basic residues) spans 51–71 (VKNRSAVRGGGKKPWRQKGTG).

It belongs to the universal ribosomal protein uL4 family. Part of the 50S ribosomal subunit.

In terms of biological role, one of the primary rRNA binding proteins, this protein initially binds near the 5'-end of the 23S rRNA. It is important during the early stages of 50S assembly. It makes multiple contacts with different domains of the 23S rRNA in the assembled 50S subunit and ribosome. Functionally, forms part of the polypeptide exit tunnel. In Lactobacillus helveticus (strain DPC 4571), this protein is Large ribosomal subunit protein uL4.